Here is a 530-residue protein sequence, read N- to C-terminus: Phosphoenolpyruvate carboxykinase (ATP) (530 aa).

Residues arginine 58, tyrosine 195, and lysine 201 each coordinate substrate. ATP is bound by residues lysine 201, histidine 220, and 236 to 244; that span reads GLSGTGKTT. Mn(2+)-binding residues include lysine 201 and histidine 220. Aspartate 257 contacts Mn(2+). ATP-binding positions include glutamate 285, arginine 321, 440–441, and threonine 446; that span reads RI. Arginine 321 contributes to the substrate binding site.

This sequence belongs to the phosphoenolpyruvate carboxykinase (ATP) family. Mn(2+) is required as a cofactor.

The protein resides in the cytoplasm. The enzyme catalyses oxaloacetate + ATP = phosphoenolpyruvate + ADP + CO2. The protein operates within carbohydrate biosynthesis; gluconeogenesis. Functionally, involved in the gluconeogenesis. Catalyzes the conversion of oxaloacetate (OAA) to phosphoenolpyruvate (PEP) through direct phosphoryl transfer between the nucleoside triphosphate and OAA. The polypeptide is Phosphoenolpyruvate carboxykinase (ATP) (Staphylococcus aureus (strain MRSA252)).